The chain runs to 253 residues: 5'/3'-nucleotidase SurE (253 aa).

4 residues coordinate a divalent metal cation: D8, D9, S39, and N92.

It belongs to the SurE nucleotidase family. A divalent metal cation is required as a cofactor.

The protein resides in the cytoplasm. It carries out the reaction a ribonucleoside 5'-phosphate + H2O = a ribonucleoside + phosphate. The catalysed reaction is a ribonucleoside 3'-phosphate + H2O = a ribonucleoside + phosphate. It catalyses the reaction [phosphate](n) + H2O = [phosphate](n-1) + phosphate + H(+). Nucleotidase with a broad substrate specificity as it can dephosphorylate various ribo- and deoxyribonucleoside 5'-monophosphates and ribonucleoside 3'-monophosphates with highest affinity to 3'-AMP. Also hydrolyzes polyphosphate (exopolyphosphatase activity) with the preference for short-chain-length substrates (P20-25). Might be involved in the regulation of dNTP and NTP pools, and in the turnover of 3'-mononucleotides produced by numerous intracellular RNases (T1, T2, and F) during the degradation of various RNAs. The polypeptide is 5'/3'-nucleotidase SurE (Salmonella paratyphi B (strain ATCC BAA-1250 / SPB7)).